A 91-amino-acid chain; its full sequence is Alpha-defensin-related sequence 10 (91 aa).

The first 19 residues, 1 to 19 (MKKLVLLSAFVLLAFQVQA), serve as a signal peptide directing secretion. The propeptide occupies 20 to 65 (DSIQNTDEETKTEEQPGEENQAMSVSFGDPEGSALQDAAVGMARPC). Residues 21–52 (SIQNTDEETKTEEQPGEENQAMSVSFGDPEGS) form a disordered region. 7 consecutive repeat copies span residues 65–67 (CPP), 68–70 (CPS), 71–73 (CPS), 74–76 (CPW), 77–79 (CPM), 80–82 (CPR), and 83–85 (CPS). A 7 X 3 AA tandem repeats of C-P-X region spans residues 65 to 85 (CPPCPSCPSCPWCPMCPRCPS).

It belongs to the alpha-defensin family. Paneth cells of the small bowel.

Its subcellular location is the secreted. Apparent precursor of a secreted, cationic, proline- and cysteine-rich peptide that contains Cys-Pro-Xaa repeats. Unlike cryptdin, the proposed mature peptide region lacks the structural motif characteristic of defensins. It may have microbicidal activities. The sequence is that of Alpha-defensin-related sequence 10 (Defa-rs10) from Mus musculus (Mouse).